Reading from the N-terminus, the 490-residue chain is 5'-3' exonuclease PLD3 (490 aa).

The Cytoplasmic portion of the chain corresponds to 1–38; sequence MKPKLMYQELKVPAEEPANELPMNEIEAWKAAEKKARW. The chain crosses the membrane as a helical; Signal-anchor for type II membrane protein span at residues 39 to 59; it reads VLLVLILAVVGFGALMTQLFL. At 60–490 the chain is on the lumenal side; it reads WEYGDLHLFG…DSVGNACRLL (431 aa). 2 disulfide bridges follow: C77–C239 and C81–C237. N-linked (GlcNAc...) asparagine glycosylation is found at N97 and N132. The PLD phosphodiesterase 1 domain maps to 196–223; that stretch reads THGVLHTKFWVVDQTHFYLGSANMDWRS. Active-site residues include H201, K203, and D208. The Proton donor role is filled by H201. Residues H201 and K203 each contribute to the phosphate site. N218 provides a ligand contact to phosphate. Residues N236, N284, and N387 are each glycosylated (N-linked (GlcNAc...) asparagine). A disulfide bridge links C366 with C487. Residues 411 to 437 form the PLD phosphodiesterase 2 domain; the sequence is YARVNHNKYMVTERATYIGTSNWSGNY. Residue H416 coordinates phosphate. The active-site Nucleophile is H416. F438 is a binding site for Mg(2+).

This sequence belongs to the phospholipase D family. As to quaternary structure, homodimer. Interacts with APP. Post-translationally, N-glycosylated. Proteolytically processed to a soluble form that is stable within endosomes and lysosomes. During transport through the secretory pathway becomes proteolysed by cysteine proteases, thereby releasing a stable soluble lysosomal lumenal polypeptide, whereas the transmembrane-bound fragment is rapidly degraded. Its transport route to lysosomes involves ubiquitination and the ESCRT complex. In terms of processing, ubiquitinated. Ubiquitination mediates sorting into lysosomes.

The protein resides in the endoplasmic reticulum membrane. The protein localises to the lysosome lumen. Its subcellular location is the early endosome membrane. It is found in the late endosome membrane. It localises to the golgi apparatus membrane. The protein resides in the endosome membrane. It carries out the reaction Exonucleolytic cleavage in the 5'- to 3'-direction to yield nucleoside 3'-phosphates.. The enzyme catalyses a 5'-end 5'-dephospho-ribonucleotidyl-ribonucleotide-RNA + H2O = a ribonucleoside 3'-phosphate + a 5'-end dephospho-ribonucleoside-RNA + H(+). The catalysed reaction is a ribonucleoside 3'-phosphate-2'-3'-cyclophospho-GMP + H2O = a ribonucleoside 3'-phosphate + 2',3'-cyclophospho-GMP + H(+). It catalyses the reaction a 5'-end 5'-dephospho-2'-deoxyribonucleotidyl-2'-deoxyribonucleotide in single-stranded DNA + H2O = a 5'-end dephospho-2'-deoxyribonucleoside in single-stranded DNA + a 2'-deoxyribonucleoside 3'-phosphate + H(+). It carries out the reaction a 5'-end 5'-phospho-2'-deoxyribonucleotide in single-stranded DNA + H2O = a 5'-end 5'-dephospho-2'-deoxyribonucleotide in single-stranded DNA + phosphate. The enzyme catalyses a 3-lyso-sn-glycero-1-phospho-(3'-acyl-1'-sn-glycerol) + a 1-acyl-sn-glycerol = a 3-acyl-sn-glycero-1-phospho-(3'-acyl-1'-sn-glycerol) + glycerol. The catalysed reaction is 3-lyso-sn-glycero-1-phospho-(3'-(9Z-octadecenoyl)-1'-sn-glycerol) + 1-(9Z-octadecenoyl)-sn-glycerol = 3-(9Z-octadecenoyl)-sn-glycero-1-phospho-(3'-(9Z-octadecenoyl)-1'-sn-glycerol) + glycerol. In terms of biological role, 5'-&gt;3' exonuclease that hydrolyzes the phosphodiester bond of single-stranded DNA (ssDNA) and RNA molecules to form nucleoside 3'-monophosphates and 5'-end 5'-hydroxy deoxyribonucleotide/ribonucleotide fragments. Partially redundant with PLD4, can cleave all four nucleotides displaying higher efficiency for ssDNA and RNA fragments initiated with uridine and guanosine residues and lower efficiency for cytidine-initiated substrates. As a result, it does not always degrade polynucleotides to the single nucleotide level, it can stall at specific sites sparing certain fragments from exonucleolytic degradation. Processes self and pathogenic ssDNA and RNA molecules that reach the endolysosomal compartment via phagocytosis or autophagy and may serve as 'danger' signals for recognition by innate immune receptors such as toll-like receptors (TLRs). Degrades mitochondrial CpG-rich ssDNA fragments to prevent TLR9 activation and autoinflammatory response, but it can cleave viral RNA to generate ligands for TLR7 activation and initiate antiviral immune responses. In plasmacytoid dendritic cells, it cooperates with endonuclease RNASET2 to release 2',3'-cyclic guanosine monophosphate (2',3'-cGMP), a potent stimulatory ligand for TLR7. Produces 2',3'-cGMPs and cytidine-rich RNA fragments that occupy TLR7 ligand-binding pockets and trigger a signaling-competent state. Can exert polynucleotide phosphatase activity toward 5'-phosphorylated ssDNA substrates although at a slow rate. Transphosphatidylase that catalyzes the exchange with R to S stereo-inversion of the glycerol moiety between (S,R)-lysophosphatidylglycerol (LPG) and monoacylglycerol (MAG) substrates to yield (S,S)-bis(monoacylglycero)phosphate (BMP). Can synthesize a variety of (S,S)-BMPs representing the main phospholipid constituent of lysosomal intralumenal vesicle (ILV) membranes that bind acid hydrolases for lipid degradation. Regulates the homeostasis and interorganellar communication of the endolysosomal system with an overall impact on cellular removal of dysfunctional organelles via autophagy as well as proper protein and lipid turnover. May play a role in myotube formation in response to ER stress. This Macaca fascicularis (Crab-eating macaque) protein is 5'-3' exonuclease PLD3 (PLD3).